The following is a 141-amino-acid chain: Hemoglobin subunit alpha-D (141 aa).

Positions 1-141 (MLTEDEKQLI…VSAVLAEKYR (141 aa)) constitute a Globin domain. His-58 and His-87 together coordinate heme b.

The protein belongs to the globin family. Heterotetramer of two alpha-D chains and two beta chains. In terms of tissue distribution, red blood cells.

In terms of biological role, involved in oxygen transport from the lung to the various peripheral tissues. The polypeptide is Hemoglobin subunit alpha-D (HBAD) (Chelonoidis carbonarius (Red-footed tortoise)).